The chain runs to 115 residues: Large ribosomal subunit protein uL24 (115 aa).

This sequence belongs to the universal ribosomal protein uL24 family. As to quaternary structure, part of the 50S ribosomal subunit.

In terms of biological role, one of two assembly initiator proteins, it binds directly to the 5'-end of the 23S rRNA, where it nucleates assembly of the 50S subunit. Its function is as follows. One of the proteins that surrounds the polypeptide exit tunnel on the outside of the subunit. In Deinococcus geothermalis (strain DSM 11300 / CIP 105573 / AG-3a), this protein is Large ribosomal subunit protein uL24.